The primary structure comprises 529 residues: uncharacterized protein (529 aa).

A helical membrane pass occupies residues 354-373 (FHVASFPWISWAILGSYIML).

It is found in the host membrane. This is an uncharacterized protein from Acidianus convivator (ATV).